Consider the following 176-residue polypeptide: Cytochrome b (176 aa).

3 consecutive transmembrane segments (helical) span residues 33-53 (FGSLLGLCLLIQILTGLFLAM), 77-98 (WLIRYMHANGASLFFICLFLHV), and 113-133 (WNIGVILLFAVMATAFMGYVL). Heme b is bound by residues H83 and H97.

This sequence belongs to the cytochrome b family. In terms of assembly, the cytochrome bc1 complex contains 11 subunits: 3 respiratory subunits (MT-CYB, CYC1 and UQCRFS1), 2 core proteins (UQCRC1 and UQCRC2) and 6 low-molecular weight proteins (UQCRH/QCR6, UQCRB/QCR7, UQCRQ/QCR8, UQCR10/QCR9, UQCR11/QCR10 and a cleavage product of UQCRFS1). This cytochrome bc1 complex then forms a dimer. Heme b is required as a cofactor.

The protein resides in the mitochondrion inner membrane. Functionally, component of the ubiquinol-cytochrome c reductase complex (complex III or cytochrome b-c1 complex) that is part of the mitochondrial respiratory chain. The b-c1 complex mediates electron transfer from ubiquinol to cytochrome c. Contributes to the generation of a proton gradient across the mitochondrial membrane that is then used for ATP synthesis. The chain is Cytochrome b (MT-CYB) from Sciurus carolinensis (Eastern gray squirrel).